The chain runs to 245 residues: uncharacterized protein (245 aa).

This is an uncharacterized protein from Acanthamoeba polyphaga (Amoeba).